Here is a 118-residue protein sequence, read N- to C-terminus: NADH-quinone oxidoreductase subunit A (118 aa).

Transmembrane regions (helical) follow at residues isoleucine 8 to phenylalanine 28, alanine 64 to phenylalanine 84, and valine 87 to leucine 107.

Belongs to the complex I subunit 3 family. As to quaternary structure, NDH-1 is composed of 14 different subunits. Subunits NuoA, H, J, K, L, M, N constitute the membrane sector of the complex.

Its subcellular location is the cell membrane. The catalysed reaction is a quinone + NADH + 5 H(+)(in) = a quinol + NAD(+) + 4 H(+)(out). In terms of biological role, NDH-1 shuttles electrons from NADH, via FMN and iron-sulfur (Fe-S) centers, to quinones in the respiratory chain. The immediate electron acceptor for the enzyme in this species is believed to be ubiquinone. Couples the redox reaction to proton translocation (for every two electrons transferred, four hydrogen ions are translocated across the cytoplasmic membrane), and thus conserves the redox energy in a proton gradient. The chain is NADH-quinone oxidoreductase subunit A from Chloroflexus aurantiacus (strain ATCC 29366 / DSM 635 / J-10-fl).